Consider the following 470-residue polypeptide: Siroheme synthase 2 (470 aa).

The precorrin-2 dehydrogenase /sirohydrochlorin ferrochelatase stretch occupies residues Met1 to Leu202. NAD(+)-binding positions include Glu22–Val23 and Pro43–Glu44. Ser126 is subject to Phosphoserine. The uroporphyrinogen-III C-methyltransferase stretch occupies residues Gly214–Ala470. Pro223 serves as a coordination point for S-adenosyl-L-methionine. Asp246 serves as the catalytic Proton acceptor. Residue Lys268 is the Proton donor of the active site. S-adenosyl-L-methionine-binding positions include Gly299–Asp301, Thr329–Ala330, Met381, and Gly410.

In the N-terminal section; belongs to the precorrin-2 dehydrogenase / sirohydrochlorin ferrochelatase family. The protein in the C-terminal section; belongs to the precorrin methyltransferase family.

The enzyme catalyses uroporphyrinogen III + 2 S-adenosyl-L-methionine = precorrin-2 + 2 S-adenosyl-L-homocysteine + H(+). The catalysed reaction is precorrin-2 + NAD(+) = sirohydrochlorin + NADH + 2 H(+). It carries out the reaction siroheme + 2 H(+) = sirohydrochlorin + Fe(2+). Its pathway is cofactor biosynthesis; adenosylcobalamin biosynthesis; precorrin-2 from uroporphyrinogen III: step 1/1. It functions in the pathway cofactor biosynthesis; adenosylcobalamin biosynthesis; sirohydrochlorin from precorrin-2: step 1/1. It participates in porphyrin-containing compound metabolism; siroheme biosynthesis; precorrin-2 from uroporphyrinogen III: step 1/1. The protein operates within porphyrin-containing compound metabolism; siroheme biosynthesis; siroheme from sirohydrochlorin: step 1/1. Its pathway is porphyrin-containing compound metabolism; siroheme biosynthesis; sirohydrochlorin from precorrin-2: step 1/1. Multifunctional enzyme that catalyzes the SAM-dependent methylations of uroporphyrinogen III at position C-2 and C-7 to form precorrin-2 via precorrin-1. Then it catalyzes the NAD-dependent ring dehydrogenation of precorrin-2 to yield sirohydrochlorin. Finally, it catalyzes the ferrochelation of sirohydrochlorin to yield siroheme. This chain is Siroheme synthase 2, found in Aeromonas hydrophila subsp. hydrophila (strain ATCC 7966 / DSM 30187 / BCRC 13018 / CCUG 14551 / JCM 1027 / KCTC 2358 / NCIMB 9240 / NCTC 8049).